A 295-amino-acid polypeptide reads, in one-letter code: CRISPR-associated endonuclease Cas1 2 (295 aa).

Mn(2+) contacts are provided by Glu-155, His-215, and Glu-230.

This sequence belongs to the CRISPR-associated endonuclease Cas1 family. Homodimer, forms a heterotetramer with a Cas2 homodimer. Mg(2+) serves as cofactor. Requires Mn(2+) as cofactor.

Its function is as follows. CRISPR (clustered regularly interspaced short palindromic repeat), is an adaptive immune system that provides protection against mobile genetic elements (viruses, transposable elements and conjugative plasmids). CRISPR clusters contain spacers, sequences complementary to antecedent mobile elements, and target invading nucleic acids. CRISPR clusters are transcribed and processed into CRISPR RNA (crRNA). Acts as a dsDNA endonuclease. Involved in the integration of spacer DNA into the CRISPR cassette. This chain is CRISPR-associated endonuclease Cas1 2, found in Pyrobaculum aerophilum (strain ATCC 51768 / DSM 7523 / JCM 9630 / CIP 104966 / NBRC 100827 / IM2).